The following is a 205-amino-acid chain: Holliday junction branch migration complex subunit RuvA (205 aa).

The segment at 1-65 (MIGRLRGAVA…SAGLRLYGFL (65 aa)) is domain I. Positions 66-144 (TREDRRAFVL…TDGPVLMSAP (79 aa)) are domain II. The interval 145-153 (TSSAPSAPA) is flexible linker. Residues 153-205 (AKPAPTGDAVAALMGLGVAEVNARRVVEAAAAELGEEATVQALIKAGLKELGR) form a domain III region.

It belongs to the RuvA family. Homotetramer. Forms an RuvA(8)-RuvB(12)-Holliday junction (HJ) complex. HJ DNA is sandwiched between 2 RuvA tetramers; dsDNA enters through RuvA and exits via RuvB. An RuvB hexamer assembles on each DNA strand where it exits the tetramer. Each RuvB hexamer is contacted by two RuvA subunits (via domain III) on 2 adjacent RuvB subunits; this complex drives branch migration. In the full resolvosome a probable DNA-RuvA(4)-RuvB(12)-RuvC(2) complex forms which resolves the HJ.

It localises to the cytoplasm. Functionally, the RuvA-RuvB-RuvC complex processes Holliday junction (HJ) DNA during genetic recombination and DNA repair, while the RuvA-RuvB complex plays an important role in the rescue of blocked DNA replication forks via replication fork reversal (RFR). RuvA specifically binds to HJ cruciform DNA, conferring on it an open structure. The RuvB hexamer acts as an ATP-dependent pump, pulling dsDNA into and through the RuvAB complex. HJ branch migration allows RuvC to scan DNA until it finds its consensus sequence, where it cleaves and resolves the cruciform DNA. The protein is Holliday junction branch migration complex subunit RuvA of Caulobacter vibrioides (strain ATCC 19089 / CIP 103742 / CB 15) (Caulobacter crescentus).